Consider the following 321-residue polypeptide: Serine/threonine-protein phosphatase 4 catalytic subunit 2 (321 aa).

Residues D64, H66, D92, and N124 each coordinate Mn(2+). H125 acts as the Proton donor in catalysis. Residues H174 and H249 each coordinate Mn(2+).

This sequence belongs to the PPP phosphatase family. PP-4 (PP-X) subfamily. In terms of assembly, serine/threonine-protein phosphatase 4 (PP4) occurs in different assemblies of the catalytic and one or more regulatory subunits. The cofactor is Mn(2+).

It carries out the reaction O-phospho-L-seryl-[protein] + H2O = L-seryl-[protein] + phosphate. The catalysed reaction is O-phospho-L-threonyl-[protein] + H2O = L-threonyl-[protein] + phosphate. Its function is as follows. Protein phosphatase which seems to be involved in larval development but not essential for embryogenesis. In Caenorhabditis elegans, this protein is Serine/threonine-protein phosphatase 4 catalytic subunit 2.